The primary structure comprises 374 residues: Putative C-&gt;U-editing enzyme APOBEC-4 (374 aa).

In terms of domain architecture, CMP/dCMP-type deaminase spans 60 to 176 (PQTKHLTFYE…AWNRKALQSL (117 aa)). H92 provides a ligand contact to Zn(2+). Residue E94 is the Proton donor of the active site. Zn(2+) is bound by residues C126 and C133. The tract at residues 259 to 280 (EKHPLGSAAPAQRQPTRGQDPR) is disordered.

The protein belongs to the cytidine and deoxycytidylate deaminase family. Zn(2+) is required as a cofactor. Predominantly expressed in testis.

Functionally, putative C to U editing enzyme whose physiological substrate is not yet known. This Mus musculus (Mouse) protein is Putative C-&gt;U-editing enzyme APOBEC-4 (Apobec4).